Reading from the N-terminus, the 426-residue chain is Serine--tRNA ligase (426 aa).

An L-serine-binding site is contributed by 233–235; it reads TAE. 264 to 266 is an ATP binding site; it reads RSE. Glu-287 provides a ligand contact to L-serine. Position 351–354 (351–354) interacts with ATP; the sequence is EISS. Ser-387 contacts L-serine.

It belongs to the class-II aminoacyl-tRNA synthetase family. Type-1 seryl-tRNA synthetase subfamily. Homodimer. The tRNA molecule binds across the dimer.

It localises to the cytoplasm. The enzyme catalyses tRNA(Ser) + L-serine + ATP = L-seryl-tRNA(Ser) + AMP + diphosphate + H(+). The catalysed reaction is tRNA(Sec) + L-serine + ATP = L-seryl-tRNA(Sec) + AMP + diphosphate + H(+). It participates in aminoacyl-tRNA biosynthesis; selenocysteinyl-tRNA(Sec) biosynthesis; L-seryl-tRNA(Sec) from L-serine and tRNA(Sec): step 1/1. Catalyzes the attachment of serine to tRNA(Ser). Is also able to aminoacylate tRNA(Sec) with serine, to form the misacylated tRNA L-seryl-tRNA(Sec), which will be further converted into selenocysteinyl-tRNA(Sec). The protein is Serine--tRNA ligase of Clostridium botulinum (strain Loch Maree / Type A3).